Consider the following 248-residue polypeptide: Adenosylcobinamide-GDP ribazoletransferase (248 aa).

6 consecutive transmembrane segments (helical) span residues 28–48, 103–123, 126–146, 169–189, 193–213, and 225–245; these read LFWFPVVGLFLGLLQAGAGYL, VGSFGAIGLILLFLFKSIVLV, LAFGLYPWIVSGVLLARLVQV, AGIQHFVAAFLVALFILLLLM, MLPSGIGLSAAIAGAVLMSLL, and VLGASSEFTEVLVWVSGVFLA.

Belongs to the CobS family. It depends on Mg(2+) as a cofactor.

The protein resides in the cell inner membrane. The enzyme catalyses alpha-ribazole + adenosylcob(III)inamide-GDP = adenosylcob(III)alamin + GMP + H(+). The catalysed reaction is alpha-ribazole 5'-phosphate + adenosylcob(III)inamide-GDP = adenosylcob(III)alamin 5'-phosphate + GMP + H(+). The protein operates within cofactor biosynthesis; adenosylcobalamin biosynthesis; adenosylcobalamin from cob(II)yrinate a,c-diamide: step 7/7. Functionally, joins adenosylcobinamide-GDP and alpha-ribazole to generate adenosylcobalamin (Ado-cobalamin). Also synthesizes adenosylcobalamin 5'-phosphate from adenosylcobinamide-GDP and alpha-ribazole 5'-phosphate. The sequence is that of Adenosylcobinamide-GDP ribazoletransferase from Chlorobium phaeobacteroides (strain BS1).